The sequence spans 1007 residues: Sal-like protein 2 (1007 aa).

The tract at residues 1–33 (MSRRKQRKPQQLISDCEGPSASENGDASEEDHP) is disordered. Residues 34 to 56 (QVCAKCCAQFTDPTEFLAHQNAC) form a C2H2-type 1; atypical zinc finger. Disordered regions lie at residues 59 to 121 (DPPV…GEES), 137 to 177 (GGGL…SGHL), 220 to 243 (PASP…PLFS), and 286 to 306 (PFSA…SPAL). Over residues 70–80 (ENPNNSSASSE) the composition is skewed to low complexity. Residues 99-108 (PPDSGSSVPT) show a composition bias toward polar residues. Positions 151–171 (PLPPESTPAPPPPPPPPPPPG) are enriched in pro residues. At serine 243 the chain carries Phosphoserine. 2 C2H2-type zinc fingers span residues 373–395 (HKCR…LRSH) and 401–423 (YKCN…FHRH). Disordered regions lie at residues 520–540 (KNKA…SGVA) and 610–629 (AASG…ASSG). 3 C2H2-type zinc fingers span residues 631-653 (NQCV…YGQH), 659-681 (FKCK…FVGH), and 691-713 (NSCP…VRMH). The segment at 714 to 886 (LGGQIPNGGT…SALTPEGEAT (173 aa)) is disordered. Over residues 734–744 (ENGSEQSTVSG) the composition is skewed to polar residues. Residues 747–757 (SFPQQQSQQPS) show a composition bias toward low complexity. Residues 758-782 (PEEELSEEEEEEDEEEEEDVTDEDS) are compositionally biased toward acidic residues. Phosphoserine occurs at positions 797, 802, and 806. The segment covering 803–812 (EEASGAEEEV) has biased composition (acidic residues). Residues 862–871 (GKEEGGKPER) show a composition bias toward basic and acidic residues. Residue lysine 911 forms a Glycyl lysine isopeptide (Lys-Gly) (interchain with G-Cter in ubiquitin) linkage. 2 C2H2-type zinc fingers span residues 911 to 933 (KACE…QKTH) and 940 to 963 (FTCV…LLAH).

This sequence belongs to the sal C2H2-type zinc-finger protein family. In terms of tissue distribution, highest levels in adult brain (in different areas). Lower levels in heart; very low levels in kidney and pancreas. Expressed throughout the retina and lens vesicle as well as the periocular mesenchyme.

It localises to the nucleus. Probable transcription factor that plays a role in eye development before, during, and after optic fissure closure. The chain is Sal-like protein 2 (SALL2) from Homo sapiens (Human).